The sequence spans 228 residues: Ribosomal RNA small subunit methyltransferase G (228 aa).

Residues G70, 121-122 (AE), and R138 contribute to the S-adenosyl-L-methionine site.

It belongs to the methyltransferase superfamily. RNA methyltransferase RsmG family.

It is found in the cytoplasm. Its function is as follows. Specifically methylates the N7 position of a guanine in 16S rRNA. This chain is Ribosomal RNA small subunit methyltransferase G, found in Thermotoga petrophila (strain ATCC BAA-488 / DSM 13995 / JCM 10881 / RKU-1).